The chain runs to 236 residues: Transcriptional activator protein SolR (236 aa).

The region spanning 169–234 (VPESSAALTA…QAVVKAIAIG (66 aa)) is the HTH luxR-type domain. A DNA-binding region (H-T-H motif) is located at residues 193–212 (AYEIGQILRISERTVNFHVN).

It belongs to the autoinducer-regulated transcriptional regulatory protein family.

The polypeptide is Transcriptional activator protein SolR (solR) (Ralstonia nicotianae (strain ATCC BAA-1114 / GMI1000) (Ralstonia solanacearum)).